A 284-amino-acid polypeptide reads, in one-letter code: D-tagatose-1,6-bisphosphate aldolase subunit GatY (284 aa).

The active-site Proton donor is the D82. The Zn(2+) site is built by H83 and H180. C181 contacts dihydroxyacetone phosphate. Residue H208 participates in Zn(2+) binding. Residues 209 to 211 (GAS) and 230 to 233 (NVAT) contribute to the dihydroxyacetone phosphate site.

This sequence belongs to the class II fructose-bisphosphate aldolase family. TagBP aldolase GatY subfamily. In terms of assembly, forms a complex with GatZ. Requires Zn(2+) as cofactor.

It carries out the reaction D-tagatofuranose 1,6-bisphosphate = D-glyceraldehyde 3-phosphate + dihydroxyacetone phosphate. It participates in carbohydrate metabolism; D-tagatose 6-phosphate degradation; D-glyceraldehyde 3-phosphate and glycerone phosphate from D-tagatose 6-phosphate: step 2/2. In terms of biological role, catalytic subunit of the tagatose-1,6-bisphosphate aldolase GatYZ, which catalyzes the reversible aldol condensation of dihydroxyacetone phosphate (DHAP or glycerone-phosphate) with glyceraldehyde 3-phosphate (G3P) to produce tagatose 1,6-bisphosphate (TBP). Requires GatZ subunit for full activity and stability. Is involved in the catabolism of galactitol. In Salmonella paratyphi A (strain ATCC 9150 / SARB42), this protein is D-tagatose-1,6-bisphosphate aldolase subunit GatY.